The primary structure comprises 1350 residues: uncharacterized protein (1350 aa).

2 disordered regions span residues 348-371 and 923-944; these read SLVGAPSPSERVMKRKSERPLDDS and SKMEGGERDATGSSMDTVRGTG. The span at 923–932 shows a compositional bias: basic and acidic residues; sequence SKMEGGERDA.

This is an uncharacterized protein from Ictalurid herpesvirus 1 (strain Auburn) (IcHV-1).